We begin with the raw amino-acid sequence, 318 residues long: S-adenosylmethionine/S-adenosylhomocysteine transporter (318 aa).

The next 10 helical transmembrane spans lie at 7 to 27 (FANL…AFIW), 44 to 64 (LFVT…LLLF), 76 to 96 (VMPI…LEFI), 105 to 125 (KACF…YVQL), 134 to 154 (LGGL…GGGE), 163 to 183 (LGMP…GWTL), 193 to 213 (SLSI…LSLA), 231 to 251 (LFLQ…YNLF), 262 to 282 (FLSF…WLLL), and 285 to 305 (SFPP…RLIY). Residues 25–148 (FIWSSSFALS…LGLVSYLVYL (124 aa)) form the EamA 1 domain. The EamA 2 domain occupies 191-304 (CESLSITAIN…GFMVLGCRLI (114 aa)).

The protein belongs to the drug/metabolite transporter (DMT) superfamily. 10 TMS drug/metabolite exporter (DME) (TC 2.A.7.3) family.

Its subcellular location is the cell membrane. In terms of biological role, transports S-adenosylmethionine (SAM) and S-adenosylhomocysteine (SAH). Allows bacteria to acquire SAM from the eukaryotic host cell and to likely remove the toxic by-product SAH. The chain is S-adenosylmethionine/S-adenosylhomocysteine transporter from Chlamydia muridarum (strain MoPn / Nigg).